Here is a 1088-residue protein sequence, read N- to C-terminus: RNA-directed RNA polymerase (1088 aa).

A RdRp catalytic domain is found at 501 to 687 (LSYGDVTRFL…AKRYIAGGKI (187 aa)).

Belongs to the reoviridae RNA-directed RNA polymerase family. Interacts with VP3 (Potential). Interacts with VP2; this interaction activates VP1. Interacts with NSP5; this interaction is probably necessary for the formation of functional virus factories. Interacts with NSP2; this interaction is weak. Mg(2+) serves as cofactor.

It is found in the virion. It carries out the reaction RNA(n) + a ribonucleoside 5'-triphosphate = RNA(n+1) + diphosphate. RNA-directed RNA polymerase that is involved in both transcription and genome replication. Together with VP3 capping enzyme, forms an enzyme complex positioned near the channels situated at each of the five-fold vertices of the core. Following infection, the outermost layer of the virus is lost, leaving a double-layered particle (DLP) made up of the core and VP6 shell. VP1 then catalyzes the transcription of fully conservative plus-strand genomic RNAs that are extruded through the DLP's channels into the cytoplasm where they function as mRNAs for translation of viral proteins. One copy of each of the viral (+)RNAs is also recruited during core assembly, together with newly synthesized polymerase complexes and VP2. The polymerase of these novo-formed particles catalyzes the synthesis of complementary minus-strands leading to dsRNA formation. To do so, the polymerase specifically recognizes and binds 4 bases 5'-UGUG-3' in the conserved 3'-sequence of plus-strand RNA templates. VP2 presumably activates the autoinhibited VP1-RNA complex to coordinate packaging and genome replication. Once dsRNA synthesis is complete, the polymerase switches to the transcriptional mode, thus providing secondary transcription. The sequence is that of RNA-directed RNA polymerase from Homo sapiens (Human).